We begin with the raw amino-acid sequence, 562 residues long: F-box only protein 33 (562 aa).

The region spanning Ala68–Leu114 is the F-box domain. The segment covering Gly155 to Gly173 has biased composition (gly residues). The disordered stretch occupies residues Gly155–Gly176.

In terms of assembly, part of the SCF (SKP1-CUL1-F-box) E3 ubiquitin-protein ligase complex SCF(FBXO33) formed of CUL1, SKP1, RBX1 and FBXO33. Interacts via its N-terminus with YBX1 CSD domain. Directly interacts with SKP1 and CUL1.

Its pathway is protein modification; protein ubiquitination. Functionally, substrate recognition component of a SCF (SKP1-CUL1-F-box protein) E3 ubiquitin-protein ligase complex which mediates the ubiquitination and subsequent proteasomal degradation of target proteins. Probably recognizes and binds to phosphorylated target proteins. Recognizes YBX1. The chain is F-box only protein 33 (Fbxo33) from Mus musculus (Mouse).